We begin with the raw amino-acid sequence, 88 residues long: Small ribosomal subunit protein uS15c (88 aa).

Belongs to the universal ribosomal protein uS15 family. Part of the 30S ribosomal subunit.

The protein resides in the plastid. It localises to the chloroplast. This Pinus thunbergii (Japanese black pine) protein is Small ribosomal subunit protein uS15c (rps15).